Reading from the N-terminus, the 386-residue chain is Lipid-A-disaccharide synthase (386 aa).

This sequence belongs to the LpxB family.

It carries out the reaction a lipid X + a UDP-2-N,3-O-bis[(3R)-3-hydroxyacyl]-alpha-D-glucosamine = a lipid A disaccharide + UDP + H(+). Its pathway is bacterial outer membrane biogenesis; LPS lipid A biosynthesis. Condensation of UDP-2,3-diacylglucosamine and 2,3-diacylglucosamine-1-phosphate to form lipid A disaccharide, a precursor of lipid A, a phosphorylated glycolipid that anchors the lipopolysaccharide to the outer membrane of the cell. This Chromohalobacter salexigens (strain ATCC BAA-138 / DSM 3043 / CIP 106854 / NCIMB 13768 / 1H11) protein is Lipid-A-disaccharide synthase.